A 127-amino-acid chain; its full sequence is Calcium-binding protein PBP1 (127 aa).

The segment covering 1-18 has biased composition (polar residues); sequence MASPKSSTRPNQENQEPQ. The disordered stretch occupies residues 1-20; it reads MASPKSSTRPNQENQEPQFQ. The 36-residue stretch at 72-107 folds into the EF-hand domain; it reads LTDDDVRYMINEGDFDRDGALNQMEFCVLMFRLSPE. Ca(2+) is bound by residues D85, D87, D89, and E96.

As to quaternary structure, interacts with PID.

Its function is as follows. Potential calcium sensor that binds calcium in vitro. In Arabidopsis thaliana (Mouse-ear cress), this protein is Calcium-binding protein PBP1 (PBP1).